The primary structure comprises 117 residues: Large ribosomal subunit protein bL20 (117 aa).

It belongs to the bacterial ribosomal protein bL20 family.

In terms of biological role, binds directly to 23S ribosomal RNA and is necessary for the in vitro assembly process of the 50S ribosomal subunit. It is not involved in the protein synthesizing functions of that subunit. The protein is Large ribosomal subunit protein bL20 of Rickettsia africae (strain ESF-5).